The sequence spans 450 residues: SAGA complex/transcription factor TFIID complex subunit Taf12 (450 aa).

3 stretches are compositionally biased toward polar residues: residues 1–10, 19–29, and 190–212; these read MNGQHSSPGT, PVNQAQFSQQR, and QNRQ…NAST. Disordered stretches follow at residues 1–29 and 190–281; these read MNGQ…SQQR and QNRQ…VEKS. Low complexity predominate over residues 217-236; it reads STASTPQLQQTQAQANAPQQ. 2 stretches are compositionally biased toward polar residues: residues 237–246 and 255–281; these read RINPETSSVP and ANVS…VEKS. S297 carries the phosphoserine modification. One can recognise a Histone-fold domain in the interval 338–413; the sequence is NGNRLLSKRK…HLERNWNIRL (76 aa). The disordered stretch occupies residues 426–450; it reads RKTGPTPSYQQKQNAIGTAKSLNKD. Residues 430-441 are compositionally biased toward polar residues; sequence PTPSYQQKQNAI.

It belongs to the TAF12 family. In terms of assembly, component of the 1.8 MDa SAGA (Spt-Ada-Gcn5 acetyltransferase) complex, which is composed of 19 subunits tra1, spt7, taf5, ngg1/ada3, sgf73, spt20, spt8, taf12, taf6, hfi1/ada1, ubp8, gcn5, ada2, spt3, sgf29, taf10, taf9, sgf11 and sus1. The SAGA complex is composed of 4 modules, namely the HAT (histone acetyltransferase) module (gcn5, ada2, ngg1/ada3 and sgf29), the DUB (deubiquitinating) module (ubp8, sgf11, sgf73 and sus1), the core or TAF (TBP-associated factor) module (taf5, taf6, taf9, taf10 and taf12), and the Tra1 or SPT (Suppressor of Ty) module (tra1, hfi1/ada1, spt3, spt7, spt8 and spt20). The Tra1/SPT module binds activators, the core module recruits TBP (TATA-binding protein), the HAT module contains the histone H3 acetyltransferase gcn5, and the DUB module comprises the histone H2B deubiquitinase ubp8. Component of the 1.2 MDa TFIID complex, which is composed of TATA-binding protein (TBP) and the 14 TBP-associated factors (TAFs). It comprises 1 copy of each taf1, taf2, taf3, taf7, taf8, taf11, taf13, 2 copies of each taf4, taf5, taf6, taf9, taf10, taf12, and 3 copies of taf14. In TFIID, taf12 heterodimerizes with taf4, forming ultimately an octamer consisting of a taf6-taf9 heterotetramer core flanked by taf4-taf12 dimers on either side, similar to the histone H2A-H2B-H3-H4 octamer.

It localises to the nucleus. Its function is as follows. Functions as a component of both the DNA-binding general transcription initiation factor complex TFIID and the transcription coactivator SAGA complex. Binding of TFIID to a promoter (with or without TATA element) is the initial step in pre-initiation complex (PIC) formation. TFIID plays a key role in the regulation of gene expression by RNA polymerase II through different activities such as transcription activator interaction, core promoter recognition and selectivity, TFIIA and TFIIB interaction, chromatin modification (histone acetylation by TAF1), facilitation of DNA opening and initiation of transcription. SAGA acts as a general cofactor required for essentially all RNA polymerase II transcription. At the promoters, SAGA is required for transcription pre-initiation complex (PIC) recruitment. It influences RNA polymerase II transcriptional activity through different activities such as TBP interaction (via core/TAF module) and promoter selectivity, interaction with transcription activators (via Tra1/SPT module), and chromatin modification through histone acetylation (via HAT module) and deubiquitination (via DUB module). SAGA preferentially acetylates histones H3 (to form H3K9ac, H3K14ac, H3K18ac and H3K23ac) and H2B and deubiquitinates histone H2B. SAGA interacts with DNA via upstream activating sequences (UASs). This Schizosaccharomyces pombe (strain 972 / ATCC 24843) (Fission yeast) protein is SAGA complex/transcription factor TFIID complex subunit Taf12.